The sequence spans 113 residues: Large ribosomal subunit protein eL34 (113 aa).

Belongs to the eukaryotic ribosomal protein eL34 family.

This is Large ribosomal subunit protein eL34 from Methanopyrus kandleri (strain AV19 / DSM 6324 / JCM 9639 / NBRC 100938).